The following is a 362-amino-acid chain: MNNTIQNSTITDDLKYVMTLDKLTEYLSCLICLPGALCNAILIYLIWKRTPIQMRSYAIYILNFALFDFATCIISFFSCQQVIFSDFSLVYIFHGPCKYVSPWFCYFCHCFMCHALAHSQWILLGSFIYRYRVLTGETPTAKDLIRNSVALYSMSLCFLLVYVFDNSDSDLLFQILTRVHPEYHYDDESIWKKSIVVSGNISAFAPITLISILYMTIPCVPIYCAILYFRHNTRVILNNPHINLSPTAKSNHVKLIRALTVQAGIPIFWLVASGIFTMSQFGIIGGPIPENITFRLMDCIPLISPIVTIIFVQPYREGLLKVLLKNSGLFVPNIIGSSIVDQTVAVTSVFGPKVTAFVQTQL.

7 consecutive transmembrane segments (helical) span residues 27 to 47 (LSCL…YLIW), 57 to 77 (YAIY…ISFF), 104 to 124 (FCYF…WILL), 144 to 164 (LIRN…VYVF), 209 to 229 (LISI…ILYF), 264 to 284 (GIPI…FGII), and 292 to 312 (ITFR…IIFV).

Belongs to the nematode receptor-like protein srd family.

The protein resides in the membrane. In terms of biological role, thought to be a chemosensory receptor. This chain is Serpentine receptor class delta-2 (srd-2), found in Caenorhabditis elegans.